Consider the following 406-residue polypeptide: COP9 signalosome complex subunit 4 (406 aa).

N-acetylalanine is present on alanine 2. N6-acetyllysine is present on lysine 25. One can recognise a PCI domain in the interval 197–366; the sequence is YRRKFIEAAQ…GIVHFETREA (170 aa).

The protein belongs to the CSN4 family. As to quaternary structure, component of the CSN complex, composed of COPS1/GPS1, COPS2, COPS3, COPS4, COPS5, COPS6, COPS7 (COPS7A or COPS7B), COPS8 and COPS9 isoform 1. In the complex, it probably interacts directly with COPS1, COPS2, COPS3, COPS5, COPS6, COPS7 (COPS7A or COPS7B) and COPS8. Interacts with TOR1A; the interaction is direct and associates TOR1A and SNAPIN with the CSN complex. Interacts with STON2; controls STON2 neddylation levels. Interacts with ERCC6.

It is found in the cytoplasm. It localises to the nucleus. The protein resides in the cytoplasmic vesicle. The protein localises to the secretory vesicle. Its subcellular location is the synaptic vesicle. Functionally, component of the COP9 signalosome complex (CSN), a complex involved in various cellular and developmental processes. The CSN complex is an essential regulator of the ubiquitin (Ubl) conjugation pathway by mediating the deneddylation of the cullin subunits of SCF-type E3 ligase complexes, leading to decrease the Ubl ligase activity of SCF-type complexes such as SCF, CSA or DDB2. Also involved in the deneddylation of non-cullin subunits such as STON2. The complex is also involved in phosphorylation of p53/TP53, c-jun/JUN, IkappaBalpha/NFKBIA, ITPK1, IRF8/ICSBP and SNAPIN, possibly via its association with CK2 and PKD kinases. CSN-dependent phosphorylation of TP53 and JUN promotes and protects degradation by the Ubl system, respectively. This chain is COP9 signalosome complex subunit 4 (COPS4), found in Homo sapiens (Human).